Here is a 635-residue protein sequence, read N- to C-terminus: Threonine--tRNA ligase (635 aa).

The TGS domain occupies 1 to 61 (MINISFPDGS…DNDCKLRILT (61 aa)). A catalytic region spans residues 242-533 (DHRKLGRELD…LIEEYAGRFP (292 aa)). Cys-333, His-384, and His-510 together coordinate Zn(2+).

It belongs to the class-II aminoacyl-tRNA synthetase family. Homodimer. It depends on Zn(2+) as a cofactor.

The protein localises to the cytoplasm. It catalyses the reaction tRNA(Thr) + L-threonine + ATP = L-threonyl-tRNA(Thr) + AMP + diphosphate + H(+). Its function is as follows. Catalyzes the attachment of threonine to tRNA(Thr) in a two-step reaction: L-threonine is first activated by ATP to form Thr-AMP and then transferred to the acceptor end of tRNA(Thr). Also edits incorrectly charged L-seryl-tRNA(Thr). This Rickettsia conorii (strain ATCC VR-613 / Malish 7) protein is Threonine--tRNA ligase.